The following is a 493-amino-acid chain: Probable malate:quinone oxidoreductase (493 aa).

Belongs to the MQO family. Requires FAD as cofactor.

The enzyme catalyses (S)-malate + a quinone = a quinol + oxaloacetate. It functions in the pathway carbohydrate metabolism; tricarboxylic acid cycle; oxaloacetate from (S)-malate (quinone route): step 1/1. This is Probable malate:quinone oxidoreductase from Mycobacterium tuberculosis (strain ATCC 25177 / H37Ra).